The following is an 890-amino-acid chain: DNA mismatch repair protein MutS (890 aa).

ATP is bound at residue 607–614 (GPNMSGKS). A disordered region spans residues 832 to 851 (ESQLSFFGGEQSSKKQDKPL).

Belongs to the DNA mismatch repair MutS family.

In terms of biological role, this protein is involved in the repair of mismatches in DNA. It is possible that it carries out the mismatch recognition step. This protein has a weak ATPase activity. The polypeptide is DNA mismatch repair protein MutS (Bacillus cereus (strain B4264)).